Consider the following 91-residue polypeptide: Large ribosomal subunit protein uL23c (91 aa).

This sequence belongs to the universal ribosomal protein uL23 family. In terms of assembly, part of the 50S ribosomal subunit.

Its subcellular location is the plastid. It localises to the chloroplast. Functionally, binds to 23S rRNA. This Physcomitrium patens (Spreading-leaved earth moss) protein is Large ribosomal subunit protein uL23c (rpl23).